The chain runs to 386 residues: Antilisterial bacteriocin subtilosin biosynthesis protein AlbE (386 aa).

Involved in the production of the bacteriocin subtilosin. This chain is Antilisterial bacteriocin subtilosin biosynthesis protein AlbE (albE), found in Bacillus subtilis.